The sequence spans 46 residues: Protein PsbN (46 aa).

Residues 10–30 (VAIAVLAALLGLTGFGVYTAF) form a helical membrane-spanning segment.

The protein belongs to the PsbN family.

It is found in the cellular thylakoid membrane. Functionally, may play a role in photosystem I and II biogenesis. The protein is Protein PsbN of Synechococcus sp. (strain CC9311).